Reading from the N-terminus, the 314-residue chain is Methionyl-tRNA formyltransferase (314 aa).

108–111 (SLLP) serves as a coordination point for (6S)-5,6,7,8-tetrahydrofolate.

It belongs to the Fmt family.

The enzyme catalyses L-methionyl-tRNA(fMet) + (6R)-10-formyltetrahydrofolate = N-formyl-L-methionyl-tRNA(fMet) + (6S)-5,6,7,8-tetrahydrofolate + H(+). In terms of biological role, attaches a formyl group to the free amino group of methionyl-tRNA(fMet). The formyl group appears to play a dual role in the initiator identity of N-formylmethionyl-tRNA by promoting its recognition by IF2 and preventing the misappropriation of this tRNA by the elongation apparatus. This is Methionyl-tRNA formyltransferase from Akkermansia muciniphila (strain ATCC BAA-835 / DSM 22959 / JCM 33894 / BCRC 81048 / CCUG 64013 / CIP 107961 / Muc).